The following is a 361-amino-acid chain: Phosphate acyltransferase (361 aa).

Positions 342 to 361 (ADGAAAEQGPTPRRTAPRQT) are disordered.

The protein belongs to the PlsX family. As to quaternary structure, homodimer. Probably interacts with PlsY.

Its subcellular location is the cytoplasm. The enzyme catalyses a fatty acyl-[ACP] + phosphate = an acyl phosphate + holo-[ACP]. Its pathway is lipid metabolism; phospholipid metabolism. Its function is as follows. Catalyzes the reversible formation of acyl-phosphate (acyl-PO(4)) from acyl-[acyl-carrier-protein] (acyl-ACP). This enzyme utilizes acyl-ACP as fatty acyl donor, but not acyl-CoA. The sequence is that of Phosphate acyltransferase from Anaeromyxobacter sp. (strain K).